Reading from the N-terminus, the 1206-residue chain is STE20-like serine/threonine-protein kinase (1206 aa).

S14 carries the phosphoserine modification. In terms of domain architecture, Protein kinase spans 34 to 292 (WEIIGELGDG…TSQLLQHPFV (259 aa)). Residues 40 to 48 (LGDGAFGKV) and K63 each bind ATP. D155 acts as the Proton acceptor in catalysis. T183 is modified (phosphothreonine). A Phosphoserine modification is found at S189. A disordered region spans residues 308–352 (KAEVTEEVEDGKEEDDDDETESALPIPANKRASSDLSIASSEEDK). The span at 312-328 (TEEVEDGKEEDDDDETE) shows a compositional bias: acidic residues. Phosphoserine is present on residues S340, S341, S344, S347, S348, S354, and S372. The segment at 364–440 (SERTEHNTSG…ESQPDTEDQQ (77 aa)) is disordered. Basic and acidic residues-rich tracts occupy residues 381-395 (LSEK…KTVD) and 420-429 (ENGREKKRPQ). A coiled-coil region spans residues 468–492 (EEDRNEENQEIIENKLTQSEEIKDI). Disordered stretches follow at residues 515–761 (DNEV…SSSD) and 773–792 (TKDS…KTLK). Positions 520-536 (FTKEETQEKLGKDDKTH) are enriched in basic and acidic residues. Phosphoserine occurs at positions 545 and 563. The segment covering 556–565 (TQKSAEQSQD) has biased composition (polar residues). Residues 584-609 (KATEGPEAHGAEEEPRSGERVEDKQL) show a composition bias toward basic and acidic residues. A compositionally biased stretch (acidic residues) spans 634-643 (EEPETDEVDQ). 3 positions are modified to phosphoserine: S645, S649, and S668. Residues 691-702 (AEPQAPAASQAS) show a composition bias toward low complexity. The segment covering 747 to 757 (TDSGTGSTVEN) has biased composition (polar residues). S776 and S778 each carry phosphoserine. T813 bears the Phosphothreonine mark. Position 817 is a phosphoserine (S817). Positions 825 to 1037 (LRRQELRELR…LKNRQTQERA (213 aa)) form a coiled coil. A UVR domain is found at 874 to 909 (DQEIENLEKQQKQTIERLEQEHTNRLRDEAKRIKGE). Phosphothreonine is present on T1065. The stretch at 1077 to 1151 (AAQEEKRQKN…ELKEWREKLR (75 aa)) forms a coiled coil. Residues 1079–1099 (QEEKRQKNERMAQHQKHESQM) are compositionally biased toward basic and acidic residues. 2 disordered regions span residues 1079-1100 (QEEK…SQMR) and 1181-1206 (LNPS…AWAG). The span at 1181–1200 (LNPSAQSRGCLQTSHPSSTR) shows a compositional bias: polar residues.

Belongs to the protein kinase superfamily. STE Ser/Thr protein kinase family. STE20 subfamily. Post-translationally, proteolytically cleaved by caspase-3. In terms of processing, autophosphorylated.

It localises to the cytoplasm. It catalyses the reaction L-seryl-[protein] + ATP = O-phospho-L-seryl-[protein] + ADP + H(+). It carries out the reaction L-threonyl-[protein] + ATP = O-phospho-L-threonyl-[protein] + ADP + H(+). Functionally, mediates apoptosis and actin stress fiber dissolution. The chain is STE20-like serine/threonine-protein kinase (Slk) from Rattus norvegicus (Rat).